Consider the following 456-residue polypeptide: Cysteine--tRNA ligase (456 aa).

Cysteine 28 contributes to the Zn(2+) binding site. The 'HIGH' region signature appears at 30–40; sequence ITVYDHCHLGH. Residues cysteine 209, histidine 234, and glutamate 238 each contribute to the Zn(2+) site. The short motif at 266–270 is the 'KMSKS' region element; that stretch reads KMAKS. Lysine 269 is a binding site for ATP.

This sequence belongs to the class-I aminoacyl-tRNA synthetase family. Monomer. It depends on Zn(2+) as a cofactor.

The protein resides in the cytoplasm. The enzyme catalyses tRNA(Cys) + L-cysteine + ATP = L-cysteinyl-tRNA(Cys) + AMP + diphosphate. In Legionella pneumophila subsp. pneumophila (strain Philadelphia 1 / ATCC 33152 / DSM 7513), this protein is Cysteine--tRNA ligase.